We begin with the raw amino-acid sequence, 209 residues long: PRA1 family protein E (209 aa).

The disordered stretch occupies residues 1–20 (MNQKPPPYGYGGAGGGGVGP). Over residues 9-19 (GYGGAGGGGVG) the composition is skewed to gly residues. 3 helical membrane-spanning segments follow: residues 90-110 (IVFL…VVFI), 132-152 (VDDK…LVYT), and 155-175 (GENV…HGAF).

The protein belongs to the PRA1 family. In terms of assembly, interacts with PRA1B1, PRA1B2, PRA1B3, PRA1B4, PRA1B5 and PRA1B6. As to expression, expressed in hypocotyls, roots, lateral roots, columella cells, leaves and shoot apex.

It localises to the endosome membrane. May be involved in both secretory and endocytic intracellular trafficking in the endosomal/prevacuolar compartments. This Arabidopsis thaliana (Mouse-ear cress) protein is PRA1 family protein E (PRA1E).